A 345-amino-acid polypeptide reads, in one-letter code: S-adenosylmethionine:tRNA ribosyltransferase-isomerase (345 aa).

It belongs to the QueA family. As to quaternary structure, monomer.

It is found in the cytoplasm. The enzyme catalyses 7-aminomethyl-7-carbaguanosine(34) in tRNA + S-adenosyl-L-methionine = epoxyqueuosine(34) in tRNA + adenine + L-methionine + 2 H(+). Its pathway is tRNA modification; tRNA-queuosine biosynthesis. Its function is as follows. Transfers and isomerizes the ribose moiety from AdoMet to the 7-aminomethyl group of 7-deazaguanine (preQ1-tRNA) to give epoxyqueuosine (oQ-tRNA). This chain is S-adenosylmethionine:tRNA ribosyltransferase-isomerase, found in Shewanella sp. (strain MR-4).